The chain runs to 545 residues: MAKRIIYNENARRALEKGMDILAESVAVTLGPKGRNVVLEKKFGAPQIVNDGVTIAKEIELEDHIENTGVALIRQAASKTNDAAGDGTTTATVLAHAMVKEGLRNVAAGANPIALKRGIDKATQFLVEKIAEHARPVEDSKAIAQVAAISAGNDEEVGRMIADAMDKVGKEGVISLEEGKSMTTELEVTEGMRFDKGYISPYFATDTERMEAVLDEPFVLVTDKKITLVQDLVPILEQVARAGKPLVIIAEDIEKEALATLVVNRLRGVLNVAAVKAPGFGDRRKAMLEDIAVLTAGQVITEDAGLKLENAKLDMLGKARRITITKDHTTIVAEGNEKAVKARCEQIRRQIEETDSSYDKEKLQERLAKLAGGVAVIKVGAATETEMKDRKLRLEDAINATKAAVEEGIVPGGGTTLVHLAPELSNWAAEHLTGEELIGANIVERALSAPLRRIAENAGQNGAIIVERVKEKPFDVGYDAAKDEYVNMFDAGIVDPAKVTRSALQNAASIAGMVLTTECIIVDKPEPKENNPAGSGAGMGGDFDY.

Residues 29 to 32 (TLGP), 86 to 90 (DGTTT), G413, 479 to 481 (DAA), and D495 each bind ATP. The disordered stretch occupies residues 525 to 545 (PEPKENNPAGSGAGMGGDFDY). Over residues 535–545 (SGAGMGGDFDY) the composition is skewed to gly residues.

The protein belongs to the chaperonin (HSP60) family. As to quaternary structure, forms a cylinder of 14 subunits composed of two heptameric rings stacked back-to-back. Interacts with the co-chaperonin GroES.

It localises to the cytoplasm. It catalyses the reaction ATP + H2O + a folded polypeptide = ADP + phosphate + an unfolded polypeptide.. Together with its co-chaperonin GroES, plays an essential role in assisting protein folding. The GroEL-GroES system forms a nano-cage that allows encapsulation of the non-native substrate proteins and provides a physical environment optimized to promote and accelerate protein folding. The sequence is that of Chaperonin GroEL 1 from Thermosynechococcus vestitus (strain NIES-2133 / IAM M-273 / BP-1).